The chain runs to 258 residues: Calcium release-activated calcium channel protein 1 (258 aa).

The Cytoplasmic segment spans residues 1 to 63; the sequence is MYPECGVETK…SRAKLKASSR (63 aa). The chain crosses the membrane as a helical span at residues 64 to 81; sequence TSALLSGFAMVAMVEVQL. Residues 82-91 are Extracellular-facing; sequence EPNHAYPPGL. A helical transmembrane segment spans residues 92–112; the sequence is LIAFSACTTVLVAVHLFALMV. Over 113–145 the chain is Cytoplasmic; that stretch reads STCILPNIEAVSNVHNLNSVKESPHERMHHHIE. A helical membrane pass occupies residues 146–166; it reads LAWAFSTVIGTLLFLAEVVLL. At 167–192 the chain is on the extracellular side; that stretch reads CWVKFLPVNSPKISSNETSAVSSGQA. Asn-182 carries N-linked (GlcNAc...) asparagine glycosylation. The helical transmembrane segment at 193–213 threads the bilayer; that stretch reads AAITSTAIMVPFGLVFIVFAV. Over 214 to 258 the chain is Cytoplasmic; that stretch reads HFYRSLVSHKTDRQFQELNELAELAQLQDQLDHRGDPVQSPVHYA.

The protein belongs to the Orai family.

Its subcellular location is the cell membrane. Functionally, ca(2+) release-activated Ca(2+) (CRAC) channel subunit which mediates Ca(2+) influx following depletion of intracellular Ca(2+) stores. The chain is Calcium release-activated calcium channel protein 1 (orai1) from Xenopus laevis (African clawed frog).